The sequence spans 576 residues: POU domain, class 6, transcription factor 1 (576 aa).

The disordered stretch occupies residues 65 to 88 (PAEAGSCDPDHSAEATVAARSPSE). Residues 414–488 (EDGINLEEIR…VLEKWLMEAE (75 aa)) form the POU-specific domain. Residues 509–568 (KRKRRTSFTPQAIEALNAYFEKNPLPTGQEITEIAKELNYDREVVRVWFCNRRQTLKNTS) constitute a DNA-binding region (homeobox).

It belongs to the POU transcription factor family. Class-6 subfamily. In terms of tissue distribution, isoform C1 and isoform C2 are found in the brain, while isoform C7 is found in the testis.

It localises to the nucleus. Functionally, transcription factor that binds preferentially to a variant of the octamer motif (5'-ATGATAAT-3'). In Mus musculus (Mouse), this protein is POU domain, class 6, transcription factor 1 (Pou6f1).